The following is a 981-amino-acid chain: NAD(+) hydrolase tir-1 (981 aa).

3 disordered regions span residues 1-31 (MLPN…RSLK), 74-128 (QNEQ…PTQP), and 173-225 (LSTP…PVDQ). 2 stretches are compositionally biased toward polar residues: residues 12–23 (PSFQSLNNNNQR) and 74–85 (QNEQDGETTSTD). Acidic residues predominate over residues 87 to 97 (AFFELDDDDDL). Positions 98-114 (SSPSVPGSPVDPPSISV) are enriched in low complexity. Positions 115-128 (PLPPKSAPPCPTQP) are enriched in pro residues. Over residues 182–200 (EEMHNGQVRKESEYRRFKS) the composition is skewed to basic and acidic residues. 2 consecutive SAM domains span residues 614 to 678 (WTCA…LKVA) and 684 to 750 (VDES…AKHP). Residues 760 to 857 (KQIDVFISYR…EHQKNIIPIF (98 aa)) enclose the TIR domain. Position 769–770 (769–770 (RR)) interacts with NAD(+). Glu842 is a catalytic residue. 3 stretches are compositionally biased toward polar residues: residues 908 to 939 (TTPT…TGPS), 954 to 963 (FTPTGSQERA), and 972 to 981 (PSASTTSDRN). Residues 908–981 (TTPTTKEMPS…PSASTTSDRN (74 aa)) are disordered.

The protein belongs to the SARM1 family. In terms of assembly, homodimer. Interacts with rab-1, pal-1 and unc-43. As to expression, highly expressed in hypodermis. Localizes to postsynaptic regions of axons.

The protein resides in the cytoplasm. It catalyses the reaction NAD(+) + H2O = ADP-D-ribose + nicotinamide + H(+). Its function is as follows. NAD(+) hydrolase, which plays a key role in non-apoptotic cell death by regulating NAD(+) metabolism. In response to stress, homooligomerizes and catalyzes cleavage of NAD(+) into ADP-D-ribose (ADPR) and nicotinamide; NAD(+) cleavage promoting non-apoptotic neuronal cell death. In males, involved in non-apoptotic death of the linker cell which guides gonad elongation during larval development. Required for both innate immune response and specification of AWC(OFF) neuron. During late embryogenesis, it acts downstream of CAMKII (unc-43) to regulate specification of asymmetric odorant receptors in AWC(OFF) neuron via the nsy-1/ASK1 pmk-1/p38 MAP kinase signaling cascade. Required to localize nsy-1 to postsynaptic regions of AWC neuron, suggesting that it may act by assembling a signaling complex that regulate odorant receptor expression. Also plays a central role in resistance to infection to a broad range of bacterial and fungi pathogens, possibly by activating pmk-1, independently of the NF-kappa-B pathway. Required for expression of antimicrobial peptides nlp-29 and nlp-31. Its role in immune response and neuron specification may be mediated by the same nsy-1/ASK1 pmk-1/p38 MAP kinase cascade signaling pathway. Involved in the response to anoxic conditions probably by activating the p38 pathway composed of nsy-1/sek-1/pmk-1. Involved in regulation of the serotonergic response of ADF neurons to pathogenic food. In addition, plays a role in the up-regulation of gcs-1 upon arsenite treatment, most likely through activation of pmk-1, to confer protection against toxicity induced by heavy metals. In terms of biological role, regulates expression of antimicrobial peptide nlp-29 in response to fungal infection or physical injury. The sequence is that of NAD(+) hydrolase tir-1 from Caenorhabditis elegans.